Reading from the N-terminus, the 218-residue chain is Putative inactive cathepsin L-like protein CTSL3P (218 aa).

Disordered stretches follow at residues 144 to 173 (GDWK…EVAQ) and 195 to 218 (GDED…EAQV). Over residues 201–212 (EDKWPHDMRNHL) the composition is skewed to basic and acidic residues.

It belongs to the peptidase C1 family.

The protein is Putative inactive cathepsin L-like protein CTSL3P (CTSL3P) of Homo sapiens (Human).